Here is a 238-residue protein sequence, read N- to C-terminus: Thiamine import ATP-binding protein ThiQ (238 aa).

One can recognise an ABC transporter domain in the interval Leu2 to Val230. Gly32 to Ser39 serves as a coordination point for ATP.

The protein belongs to the ABC transporter superfamily. Thiamine importer (TC 3.A.1.19.1) family. In terms of assembly, the complex is composed of two ATP-binding proteins (ThiQ), two transmembrane proteins (ThiP) and a solute-binding protein (ThiB).

It localises to the cell inner membrane. It carries out the reaction thiamine(out) + ATP + H2O = thiamine(in) + ADP + phosphate + H(+). In terms of biological role, part of the ABC transporter complex ThiBPQ involved in thiamine import. Responsible for energy coupling to the transport system. This Vibrio cholerae serotype O1 (strain ATCC 39315 / El Tor Inaba N16961) protein is Thiamine import ATP-binding protein ThiQ.